The sequence spans 379 residues: uncharacterized protein (379 aa).

It belongs to the glycosyltransferase 28 family.

This is an uncharacterized protein from Methanosarcina mazei (strain ATCC BAA-159 / DSM 3647 / Goe1 / Go1 / JCM 11833 / OCM 88) (Methanosarcina frisia).